A 940-amino-acid chain; its full sequence is UvrABC system protein A (940 aa).

Residue Gly-31–Ser-38 coordinates ATP. The C4-type zinc finger occupies Cys-253–Cys-280. 2 consecutive ABC transporter domains span residues Trp-310–Leu-587 and Ala-607–Lys-937. Gly-640–Ser-647 provides a ligand contact to ATP. A C4-type zinc finger spans residues Cys-740–Cys-766.

This sequence belongs to the ABC transporter superfamily. UvrA family. In terms of assembly, forms a heterotetramer with UvrB during the search for lesions.

It localises to the cytoplasm. The UvrABC repair system catalyzes the recognition and processing of DNA lesions. UvrA is an ATPase and a DNA-binding protein. A damage recognition complex composed of 2 UvrA and 2 UvrB subunits scans DNA for abnormalities. When the presence of a lesion has been verified by UvrB, the UvrA molecules dissociate. In Escherichia coli O6:H1 (strain CFT073 / ATCC 700928 / UPEC), this protein is UvrABC system protein A.